Here is a 489-residue protein sequence, read N- to C-terminus: Protein P7 (489 aa).

RNA-binding regions lie at residues 129-251 (TSLI…GRML) and 321-351 (AGDY…FQVN).

Belongs to the phytoreovirus protein P7 family.

Its subcellular location is the virion. It localises to the host cytoplasm. Probable component of the transcriptional machinery present in the inner capsid. Displays dsRNA binding activity and may play an important role in the sorting of viral RNA and virion assembly. Together with the RNA-directed RNA polymerase P1 and capping enzyme P5, forms an transcriptional complex positioned near the channels situated at each of the five-fold vertices of the core. In Rice gall dwarf virus (RGDV), this protein is Protein P7.